A 249-amino-acid chain; its full sequence is Homeobox protein TGIF2LX (249 aa).

Disordered regions lie at residues 1-62 (MEAA…KRKG) and 126-192 (DPIV…KLTV). Basic and acidic residues predominate over residues 9–27 (AETRSRVEKDSRRAKKDSP). The span at 28–46 (AKTQSPAQDTSIMLRNNAD) shows a compositional bias: polar residues. A DNA-binding region (homeobox; TALE-type) is located at residues 55–118 (EHKKKRKGYL…INARRRILPD (64 aa)). Positions 159-172 (DNVQSLPLRSSPKG) are enriched in polar residues.

This sequence belongs to the TALE/TGIF homeobox family.

Its subcellular location is the nucleus. Its function is as follows. May have a transcription role in testis. In Macaca fascicularis (Crab-eating macaque), this protein is Homeobox protein TGIF2LX (TGIF2LX).